A 113-amino-acid chain; its full sequence is Insulin-like peptide 02 (113 aa).

The signal sequence occupies residues 1–22; it reads MFYLTFLLFGAICIGQIQLGQP. The propeptide occupies 23–42; it reads VKFKVNEDGHRPSVYPIKYR. 3 disulfide bridges follow: Cys44-Cys99, Cys56-Cys112, and Cys98-Cys103. Positions 62–87 are cleaved as a propeptide — c peptide; sequence RRKRSIEADIITDKDTANSYFNRVKR.

The protein belongs to the insulin family.

Its subcellular location is the secreted. In terms of biological role, insulin decreases blood glucose concentration. May have evolved to activate insulin receptors (INSR) in vertebrates. Molecular docking studies reveals unique interaction with the human insulin receptor. In vivo, insulin-like peptide injection reduces blood glucose levels in two models of zebrafish diabetes (streptozotocin- and glucose-induced). Also shorter swimming distance of zebrafish larvae, an effect which is not observed with human insulin. This is Insulin-like peptide 02 from Exaiptasia diaphana (Tropical sea anemone).